The chain runs to 134 residues: Small ribosomal subunit protein uS12 (134 aa).

The segment at 1–27 is disordered; it reads MPTIQQLVRKGRESFADKSKSPALNSC. Positions 10 to 20 are enriched in basic and acidic residues; the sequence is KGRESFADKSK. D89 is modified (3-methylthioaspartic acid). A disordered region spans residues 103-134; that stretch reads DTAGVNGRTQRRSKYGAKRPKPGQAPAAKGKK. Residues 111-123 show a composition bias toward basic residues; the sequence is TQRRSKYGAKRPK. The span at 124–134 shows a compositional bias: low complexity; sequence PGQAPAAKGKK.

It belongs to the universal ribosomal protein uS12 family. Part of the 30S ribosomal subunit. Contacts proteins S8 and S17. May interact with IF1 in the 30S initiation complex.

With S4 and S5 plays an important role in translational accuracy. Its function is as follows. Interacts with and stabilizes bases of the 16S rRNA that are involved in tRNA selection in the A site and with the mRNA backbone. Located at the interface of the 30S and 50S subunits, it traverses the body of the 30S subunit contacting proteins on the other side and probably holding the rRNA structure together. The combined cluster of proteins S8, S12 and S17 appears to hold together the shoulder and platform of the 30S subunit. This chain is Small ribosomal subunit protein uS12, found in Porphyromonas gingivalis (strain ATCC 33277 / DSM 20709 / CIP 103683 / JCM 12257 / NCTC 11834 / 2561).